Reading from the N-terminus, the 158-residue chain is Cyclic pyranopterin monophosphate synthase (158 aa).

Substrate contacts are provided by residues 73–75 and 110–111; these read LCH and ME. Asp-125 is an active-site residue.

The protein belongs to the MoaC family. In terms of assembly, homohexamer; trimer of dimers.

The enzyme catalyses (8S)-3',8-cyclo-7,8-dihydroguanosine 5'-triphosphate = cyclic pyranopterin phosphate + diphosphate. It functions in the pathway cofactor biosynthesis; molybdopterin biosynthesis. Functionally, catalyzes the conversion of (8S)-3',8-cyclo-7,8-dihydroguanosine 5'-triphosphate to cyclic pyranopterin monophosphate (cPMP). The protein is Cyclic pyranopterin monophosphate synthase of Ectopseudomonas mendocina (strain ymp) (Pseudomonas mendocina).